Reading from the N-terminus, the 26-residue chain is 83 kDa hypersensitivity protein (26 aa).

The interval 1-26 (FTPEDFISAPRRGEAIPDPKGELAVF) is disordered. Residues 11–26 (RRGEAIPDPKGELAVF) show a composition bias toward basic and acidic residues.

The sequence is that of 83 kDa hypersensitivity protein from Trichophyton tonsurans (Scalp ringworm fungus).